The chain runs to 63 residues: Putative ankyrin repeat protein RF_p14 (63 aa).

ANK repeat units follow at residues 11–43 and 44–63; these read KLNQ…CRDH and QGDT…ILDI.

The polypeptide is Putative ankyrin repeat protein RF_p14 (Rickettsia felis (strain ATCC VR-1525 / URRWXCal2) (Rickettsia azadi)).